We begin with the raw amino-acid sequence, 57 residues long: Protein CgkB (57 aa).

The polypeptide is Protein CgkB (cgkB) (Pseudoalteromonas carrageenovora (Alteromonas carrageenovora)).